We begin with the raw amino-acid sequence, 194 residues long: Large ribosomal subunit protein bL9 (194 aa).

The segment at Gln148–Ala194 is disordered.

It belongs to the bacterial ribosomal protein bL9 family.

In terms of biological role, binds to the 23S rRNA. The sequence is that of Large ribosomal subunit protein bL9 from Caulobacter vibrioides (strain ATCC 19089 / CIP 103742 / CB 15) (Caulobacter crescentus).